Reading from the N-terminus, the 115-residue chain is MSGDTGTTSVAPPPGETEPGHGVRIVVEYCEPCGFEATYLELASAVKEQYPGIEIESRLGGTGAFEIEINGQLVFSKLENGGFPYEKDLIEAIRRASNGEPLEKITNSRPPCVIL.

The span at 1–10 (MSGDTGTTSV) shows a compositional bias: polar residues. Residues 1-22 (MSGDTGTTSVAPPPGETEPGHG) form a disordered region. Serine 2 bears the N-acetylserine mark. Cysteines 30 and 33 form a disulfide. The S-geranylgeranyl cysteine moiety is linked to residue cysteine 112. A propeptide spans 113-115 (VIL) (removed in mature form).

The protein belongs to the SelWTH family. Interacts with GPX1. In terms of processing, isoprenylation facilitates association with the plasma membrane and enhances the migratory phenotype of cells by inducing increased filopodia formation.

It is found in the cytoplasm. The protein resides in the cytosol. The protein localises to the cell membrane. In terms of biological role, increases cell migration by inducing filopodia formation at the leading edge of migrating cells. Plays a role in regulation of apoptosis, possibly through control of CASP3. May be involved in a redox-related process. The chain is Migration and invasion enhancer 1 (MIEN1) from Bos taurus (Bovine).